The sequence spans 666 residues: Nuclear distribution protein nudE homolog 1 (666 aa).

Positions 14 to 195 (EEEIAHYREK…KDQLARAIAT (182 aa)) form a coiled coil. Disordered regions lie at residues 40–64 (EFQQ…KQQA), 220–310 (DDIN…SGIP), 369–388 (KRVT…PAPH), and 397–666 (DHNT…KVKK). Over residues 251 to 274 (RSGTMSSIPVASPSTKRFSQQIPH) the composition is skewed to polar residues. Low complexity-rich tracts occupy residues 275 to 287 (SPSF…STTS) and 372 to 383 (TSTTSTTSSTTT). A compositionally biased stretch (polar residues) spans 400-410 (TTPTAQSQQFP). Composition is skewed to low complexity over residues 449–465 (PTFR…LPSR), 473–485 (ASGS…SGTA), and 536–554 (SATP…STSN). Composition is skewed to polar residues over residues 587 to 599 (RQSL…TPTT) and 614 to 638 (SSLS…SGRP).

It belongs to the nudE family. In terms of assembly, self-associates. Interacts with PAC1.

The protein resides in the cytoplasm. Its subcellular location is the cytoskeleton. Its function is as follows. Required for nuclear migration. The protein is Nuclear distribution protein nudE homolog 1 (NDE1) of Cryptococcus neoformans var. neoformans serotype D (strain B-3501A) (Filobasidiella neoformans).